We begin with the raw amino-acid sequence, 349 residues long: Ribosomal RNA small subunit methyltransferase H (349 aa).

S-adenosyl-L-methionine-binding positions include 34–36 (GGH), aspartate 54, phenylalanine 81, aspartate 102, and glutamine 109.

It belongs to the methyltransferase superfamily. RsmH family.

Its subcellular location is the cytoplasm. It catalyses the reaction cytidine(1402) in 16S rRNA + S-adenosyl-L-methionine = N(4)-methylcytidine(1402) in 16S rRNA + S-adenosyl-L-homocysteine + H(+). Specifically methylates the N4 position of cytidine in position 1402 (C1402) of 16S rRNA. This Dehalococcoides mccartyi (strain ATCC BAA-2266 / KCTC 15142 / 195) (Dehalococcoides ethenogenes (strain 195)) protein is Ribosomal RNA small subunit methyltransferase H.